The chain runs to 389 residues: uncharacterized protein (389 aa).

4 disordered regions span residues 119–156 (SSLF…GENQ), 180–233 (PTSK…SSMG), 294–321 (SIPS…TSRT), and 362–389 (PEDM…EIKV). Polar residues predominate over residues 137 to 155 (SPSTINIEKNRHSSNSGEN). Over residues 190–204 (DDGDEEDDTDDEGEA) the composition is skewed to acidic residues.

This is an uncharacterized protein from Caenorhabditis elegans.